Consider the following 1402-residue polypeptide: DNA-directed RNA polymerase subunit beta' (1402 aa).

Zn(2+) contacts are provided by C71, C73, C86, and C89. Residues D462, D464, and D466 each contribute to the Mg(2+) site. Zn(2+) is bound by residues C811, C885, C892, and C895.

It belongs to the RNA polymerase beta' chain family. The RNAP catalytic core consists of 2 alpha, 1 beta, 1 beta' and 1 omega subunit. When a sigma factor is associated with the core the holoenzyme is formed, which can initiate transcription. It depends on Mg(2+) as a cofactor. The cofactor is Zn(2+).

The enzyme catalyses RNA(n) + a ribonucleoside 5'-triphosphate = RNA(n+1) + diphosphate. Functionally, DNA-dependent RNA polymerase catalyzes the transcription of DNA into RNA using the four ribonucleoside triphosphates as substrates. The protein is DNA-directed RNA polymerase subunit beta' of Rhizobium etli (strain ATCC 51251 / DSM 11541 / JCM 21823 / NBRC 15573 / CFN 42).